The following is a 144-amino-acid chain: Granulocyte-macrophage colony-stimulating factor (144 aa).

A signal peptide spans 1–17 (MWLQSLLLLGTVACSIS). Residues serine 22, serine 24, and serine 26 are each glycosylated (O-linked (GalNAc...) serine). Threonine 27 carries O-linked (GalNAc...) threonine; partial glycosylation. Asparagine 44 and asparagine 54 each carry an N-linked (GlcNAc...) asparagine glycan. 2 disulfides stabilise this stretch: cysteine 71/cysteine 113 and cysteine 105/cysteine 138.

This sequence belongs to the GM-CSF family. In terms of assembly, monomer. The signaling GM-CSF receptor complex is a dodecamer of two head-to-head hexamers of two alpha, two beta, and two ligand subunits.

Its subcellular location is the secreted. In terms of biological role, cytokine that stimulates the growth and differentiation of hematopoietic precursor cells from various lineages, including granulocytes, macrophages, eosinophils and erythrocytes. This is Granulocyte-macrophage colony-stimulating factor (CSF2) from Homo sapiens (Human).